A 242-amino-acid chain; its full sequence is Urease accessory protein UreF (242 aa).

It belongs to the UreF family. UreD, UreF and UreG form a complex that acts as a GTP-hydrolysis-dependent molecular chaperone, activating the urease apoprotein by helping to assemble the nickel containing metallocenter of UreC. The UreE protein probably delivers the nickel.

The protein localises to the cytoplasm. In terms of biological role, required for maturation of urease via the functional incorporation of the urease nickel metallocenter. This is Urease accessory protein UreF from Bradyrhizobium diazoefficiens (strain JCM 10833 / BCRC 13528 / IAM 13628 / NBRC 14792 / USDA 110).